Reading from the N-terminus, the 274-residue chain is Thiazole synthase (274 aa).

Catalysis depends on K111, which acts as the Schiff-base intermediate with DXP. 1-deoxy-D-xylulose 5-phosphate contacts are provided by residues G172, 198–199, and 220–221; these read AG and NT.

The protein belongs to the ThiG family. As to quaternary structure, homotetramer. Forms heterodimers with either ThiH or ThiS.

It localises to the cytoplasm. The enzyme catalyses [ThiS sulfur-carrier protein]-C-terminal-Gly-aminoethanethioate + 2-iminoacetate + 1-deoxy-D-xylulose 5-phosphate = [ThiS sulfur-carrier protein]-C-terminal Gly-Gly + 2-[(2R,5Z)-2-carboxy-4-methylthiazol-5(2H)-ylidene]ethyl phosphate + 2 H2O + H(+). Its pathway is cofactor biosynthesis; thiamine diphosphate biosynthesis. Functionally, catalyzes the rearrangement of 1-deoxy-D-xylulose 5-phosphate (DXP) to produce the thiazole phosphate moiety of thiamine. Sulfur is provided by the thiocarboxylate moiety of the carrier protein ThiS. In vitro, sulfur can be provided by H(2)S. The sequence is that of Thiazole synthase from Gloeobacter violaceus (strain ATCC 29082 / PCC 7421).